The primary structure comprises 105 residues: Nucleoid-associated protein SSP2277 (105 aa).

Positions 1–41 (MRGGGNMQQMMKQMQKMQKKMGEEQEKLKEEKVQGTAGGGM) are disordered. A compositionally biased stretch (low complexity) spans 7–16 (MQQMMKQMQK). A compositionally biased stretch (basic and acidic residues) spans 20–33 (KMGEEQEKLKEEKV).

It belongs to the YbaB/EbfC family. In terms of assembly, homodimer.

Its subcellular location is the cytoplasm. It localises to the nucleoid. Functionally, binds to DNA and alters its conformation. May be involved in regulation of gene expression, nucleoid organization and DNA protection. This chain is Nucleoid-associated protein SSP2277, found in Staphylococcus saprophyticus subsp. saprophyticus (strain ATCC 15305 / DSM 20229 / NCIMB 8711 / NCTC 7292 / S-41).